Consider the following 450-residue polypeptide: tRNA-2-methylthio-N(6)-dimethylallyladenosine synthase (450 aa).

An MTTase N-terminal domain is found at 2–119 (KKVFVKTYGC…LPDLIARRQR (118 aa)). Residues C11, C48, C82, C156, C160, and C163 each coordinate [4Fe-4S] cluster. The region spanning 142–375 (RVEGPSAFVS…QATIEENVQR (234 aa)) is the Radical SAM core domain. A TRAM domain is found at 378–448 (QNMVGTVQRI…PHSLRGEIVV (71 aa)).

Belongs to the methylthiotransferase family. MiaB subfamily. Monomer. Requires [4Fe-4S] cluster as cofactor.

Its subcellular location is the cytoplasm. It catalyses the reaction N(6)-dimethylallyladenosine(37) in tRNA + (sulfur carrier)-SH + AH2 + 2 S-adenosyl-L-methionine = 2-methylsulfanyl-N(6)-dimethylallyladenosine(37) in tRNA + (sulfur carrier)-H + 5'-deoxyadenosine + L-methionine + A + S-adenosyl-L-homocysteine + 2 H(+). In terms of biological role, catalyzes the methylthiolation of N6-(dimethylallyl)adenosine (i(6)A), leading to the formation of 2-methylthio-N6-(dimethylallyl)adenosine (ms(2)i(6)A) at position 37 in tRNAs that read codons beginning with uridine. This chain is tRNA-2-methylthio-N(6)-dimethylallyladenosine synthase, found in Cupriavidus necator (strain ATCC 17699 / DSM 428 / KCTC 22496 / NCIMB 10442 / H16 / Stanier 337) (Ralstonia eutropha).